We begin with the raw amino-acid sequence, 536 residues long: MQETGLRNPTNGIETSGLKTSGTVFFNLTEPQLYEEAIRRAEARISAHGALVAETGQHTGRSPKDKFIVRDASTENEIWWDNNKPLSGEHFEALYEDFKRHAESLDLFVQDLVGGADPENALPVRVVTEYAWHSLFIRNLLIRPMRSELKSFVPQMTVIDLPSFRADPKRHGCRTETIIAMDLKRMIVLIGGTSYAGEMKKSVFTALNYLLPAKGVMPMHCSANEGSEGDVAIFFGLSGTGKTTLSAEPSRTLIGDDEHGWGPHGIFNFEGGCYAKTIKLSREAEPEIFATTERFGTVLENVVVDEHGVPDFDDGSRTENTRCAYPLHFISNASETGRAGQPKNVIMLTADAFGVMPPIAKLTPAQAMYHFLSGYTAKVAGTEKGVTEPEATFSTCFGAPFMPRHPSVYGNLLRDLIAEHEVDCWLVNTGWTGGAYGTGHRMPIKVTRALLSAALDGSLRTAQFRTDPNFGFAVPVAVPGVDGTILDPRSTWADKAAYDVQAERLVSMFVANFGKFENHVEADVMNASPQIRQAAE.

The substrate site is built by R61, Y195, and K201. ATP is bound by residues K201, H220, and 236 to 244 (GLSGTGKTT). Residues K201 and H220 each coordinate Mn(2+). D257 serves as a coordination point for Mn(2+). 3 residues coordinate ATP: E285, R322, and T447. A substrate-binding site is contributed by R322.

This sequence belongs to the phosphoenolpyruvate carboxykinase (ATP) family. The cofactor is Mn(2+).

It localises to the cytoplasm. It catalyses the reaction oxaloacetate + ATP = phosphoenolpyruvate + ADP + CO2. Its pathway is carbohydrate biosynthesis; gluconeogenesis. Its function is as follows. Involved in the gluconeogenesis. Catalyzes the conversion of oxaloacetate (OAA) to phosphoenolpyruvate (PEP) through direct phosphoryl transfer between the nucleoside triphosphate and OAA. This Chelativorans sp. (strain BNC1) protein is Phosphoenolpyruvate carboxykinase (ATP).